Here is a 691-residue protein sequence, read N- to C-terminus: Elongation factor G (691 aa).

The region spanning 8-283 (EDYRNIGIMA…AVVDFLPSPL (276 aa)) is the tr-type G domain. GTP is bound by residues 17 to 24 (AHIDAGKT), 81 to 85 (DTPGH), and 135 to 138 (NKMD).

The protein belongs to the TRAFAC class translation factor GTPase superfamily. Classic translation factor GTPase family. EF-G/EF-2 subfamily.

The protein localises to the cytoplasm. In terms of biological role, catalyzes the GTP-dependent ribosomal translocation step during translation elongation. During this step, the ribosome changes from the pre-translocational (PRE) to the post-translocational (POST) state as the newly formed A-site-bound peptidyl-tRNA and P-site-bound deacylated tRNA move to the P and E sites, respectively. Catalyzes the coordinated movement of the two tRNA molecules, the mRNA and conformational changes in the ribosome. The chain is Elongation factor G from Parvibaculum lavamentivorans (strain DS-1 / DSM 13023 / NCIMB 13966).